Reading from the N-terminus, the 177-residue chain is Large ribosomal subunit protein bL31m (177 aa).

A mitochondrion-targeting transit peptide spans 1–14 (MLKSIFAKRFASTG). Residues 36–118 (KSRPAIYHQF…FSVDSTTPNS (83 aa)) form a sufficient for general mitochondrial translation region. The segment at 87-177 (LVVVDANSGG…KLASKKRDKK (91 aa)) is sufficient for dosage suppression of COX2 mutation. The span at 111–123 (VDSTTPNSSSETV) shows a compositional bias: polar residues. The disordered stretch occupies residues 111–144 (VDSTTPNSSSETVELSEENKKKTQIKKEEKEDVS). The segment covering 127–144 (EENKKKTQIKKEEKEDVS) has biased composition (basic and acidic residues).

This sequence belongs to the bacterial ribosomal protein bL31 family. Highly divergent. Component of the mitochondrial large ribosomal subunit (mt-LSU). Mature yeast 74S mitochondrial ribosomes consist of a small (37S) and a large (54S) subunit. The 37S small subunit contains a 15S ribosomal RNA (15S mt-rRNA) and 34 different proteins. The 54S large subunit contains a 21S rRNA (21S mt-rRNA) and 46 different proteins.

Its subcellular location is the mitochondrion. In terms of biological role, component of the mitochondrial ribosome (mitoribosome), a dedicated translation machinery responsible for the synthesis of mitochondrial genome-encoded proteins, including at least some of the essential transmembrane subunits of the mitochondrial respiratory chain. The mitoribosomes are attached to the mitochondrial inner membrane and translation products are cotranslationally integrated into the membrane. Overexpression of bL31m suppresses mutations in the COX2 leader peptide-encoding and initiation codon regions. This chain is Large ribosomal subunit protein bL31m (MRPL36), found in Saccharomyces cerevisiae (strain ATCC 204508 / S288c) (Baker's yeast).